The chain runs to 178 residues: Interleukin-10 (178 aa).

The first 18 residues, 1–18 (MPGSALLCCLLLLAGVKT), serve as a signal peptide directing secretion. The N-linked (GlcNAc...) asparagine glycan is linked to asparagine 29. 2 disulfide bridges follow: cysteine 30–cysteine 126 and cysteine 80–cysteine 132. An N-linked (GlcNAc...) asparagine glycan is attached at asparagine 134.

The protein belongs to the IL-10 family. Homodimer. Interacts with IL10RA and IL10RB.

It localises to the secreted. Functionally, major immune regulatory cytokine that acts on many cells of the immune system where it has profound anti-inflammatory functions, limiting excessive tissue disruption caused by inflammation. Mechanistically, IL10 binds to its heterotetrameric receptor comprising IL10RA and IL10RB leading to JAK1 and STAT2-mediated phosphorylation of STAT3. In turn, STAT3 translocates to the nucleus where it drives expression of anti-inflammatory mediators. Targets antigen-presenting cells (APCs) such as macrophages and monocytes and inhibits their release of pro-inflammatory cytokines including granulocyte-macrophage colony-stimulating factor /GM-CSF, granulocyte colony-stimulating factor/G-CSF, IL-1 alpha, IL-1 beta, IL-6, IL-8 and TNF-alpha. Also interferes with antigen presentation by reducing the expression of MHC-class II and co-stimulatory molecules, thereby inhibiting their ability to induce T cell activation. In addition, controls the inflammatory response of macrophages by reprogramming essential metabolic pathways including mTOR signaling. The polypeptide is Interleukin-10 (Il10) (Rattus norvegicus (Rat)).